The following is a 719-amino-acid chain: Nucleolar complex protein 2 homolog (719 aa).

The span at 1–24 shows a compositional bias: basic residues; the sequence is MKLLKKSSSLKKGVTKRAKLQKKP. 3 disordered regions span residues 1-67, 86-136, and 643-719; these read MKLL…GMKK, LQQE…TKIK, and ALEN…SDED. Residues 25-42 are compositionally biased toward basic and acidic residues; sequence PSKDEASSSDEELAKLDG. The segment covering 89–130 has biased composition (acidic residues); the sequence is EDADLLNMEEDEDDDEEGEDNEDEEDEEEEEESDEDDDEEDD. Basic and acidic residues predominate over residues 643 to 661; the sequence is ALENSKKDDKKKKKEEEAA.

Belongs to the NOC2 family.

Its subcellular location is the nucleus. Functionally, required for normal somatic gonad development and for regulation of germline development and proliferation. The chain is Nucleolar complex protein 2 homolog (pro-2) from Caenorhabditis briggsae.